The sequence spans 193 residues: Ras-like protein 2 (193 aa).

Residue 12-19 coordinates GTP; the sequence is GGGGVGKS. The short motif at 34-42 is the Effector region element; it reads YDPTIEDSY. GTP contacts are provided by residues 59 to 63 and 118 to 121; these read DTAGQ and NKCD. C190 is modified (cysteine methyl ester). C190 is lipidated: S-geranylgeranyl cysteine. Residues 191–193 constitute a propeptide, removed in mature form; the sequence is KLL.

The protein belongs to the small GTPase superfamily. Ras family.

It localises to the cell membrane. It catalyses the reaction GTP + H2O = GDP + phosphate + H(+). Functionally, ras proteins bind GDP/GTP and possess intrinsic GTPase activity. This is Ras-like protein 2 (RAS-2) from Physarum polycephalum (Slime mold).